Consider the following 235-residue polypeptide: Purine nucleoside phosphorylase DeoD-type (235 aa).

Position 4 (H4) interacts with a purine D-ribonucleoside. Phosphate-binding positions include G20, R24, R43, and 87-90 (RVGT). A purine D-ribonucleoside contacts are provided by residues E162, 179–181 (EME), and 203–204 (SD). D204 functions as the Proton donor in the catalytic mechanism.

This sequence belongs to the PNP/UDP phosphorylase family. As to quaternary structure, homohexamer; trimer of homodimers.

It carries out the reaction a purine D-ribonucleoside + phosphate = a purine nucleobase + alpha-D-ribose 1-phosphate. The catalysed reaction is a purine 2'-deoxy-D-ribonucleoside + phosphate = a purine nucleobase + 2-deoxy-alpha-D-ribose 1-phosphate. Catalyzes the reversible phosphorolytic breakdown of the N-glycosidic bond in the beta-(deoxy)ribonucleoside molecules, with the formation of the corresponding free purine bases and pentose-1-phosphate. This Bacillus cereus (strain B4264) protein is Purine nucleoside phosphorylase DeoD-type.